The following is a 1819-amino-acid chain: Gamma-tubulin complex component 6 (1819 aa).

Disordered stretches follow at residues Ser-810–Pro-889, Leu-929–Tyr-951, and Arg-1000–Glu-1023. Tandem repeats lie at residues Gly-1027–His-1053, Gly-1054–His-1080, Gly-1081–His-1107, Gly-1108–His-1134, Gly-1135–His-1161, Gly-1162–His-1188, Gly-1189–His-1215, Gly-1216–His-1242, and Gly-1243–His-1269. The segment at Gly-1027–His-1269 is 9 X 27 AA tandem repeats. A disordered region spans residues Pro-1271–Gln-1412. A compositionally biased stretch (polar residues) spans Pro-1297–Val-1314. The segment covering Leu-1321–Gly-1335 has biased composition (low complexity). Over residues Trp-1384–Pro-1398 the composition is skewed to polar residues.

Belongs to the TUBGCP family. As to quaternary structure, component of the gamma-tubulin ring complex (gTuRC) consisting of TUBGCP2, TUBGCP3, TUBGCP4, TUBGCP5 and TUBGCP6 and gamma-tubulin TUBG1 or TUBG2. TUBGCP2, TUBGCP3, TUBGCP4, TUBGCP5 and TUBGCP6 assemble in a 5:5:2:1:1 stoichiometry; each is associated with a gamma-tubulin, thereby arranging 14 gamma-tubulins in a helical manner. Gamma-tubulin at the first position is blocked by TUBGCP3 at the last position, allowing 13 protafilaments to grow into a microtubule. The gTuRC (via TUBGCP3 and TUBGCP6) interacts with ACTB and MZT1; the interactions form a luminal bridge that stabilizes the initial structure during complex assembly. The gTuRC (via TUBGCP2) interacts with MZT2A/MZT2B and CDK5RAP2 (via CM1 motif); the interactions play a role in gTuRC activation.

The protein localises to the cytoplasm. The protein resides in the cytoskeleton. Its subcellular location is the microtubule organizing center. It localises to the centrosome. Its function is as follows. Component of the gamma-tubulin ring complex (gTuRC) which mediates microtubule nucleation. The gTuRC regulates the minus-end nucleation of alpha-beta tubulin heterodimers that grow into microtubule protafilaments, a critical step in centrosome duplication and spindle formation. The sequence is that of Gamma-tubulin complex component 6 (TUBGCP6) from Homo sapiens (Human).